Reading from the N-terminus, the 277-residue chain is 4-diphosphocytidyl-2-C-methyl-D-erythritol kinase (277 aa).

Lys9 is an active-site residue. 91–101 (PMGAGLGGGSS) serves as a coordination point for ATP. Asp133 is an active-site residue.

The protein belongs to the GHMP kinase family. IspE subfamily.

The catalysed reaction is 4-CDP-2-C-methyl-D-erythritol + ATP = 4-CDP-2-C-methyl-D-erythritol 2-phosphate + ADP + H(+). The protein operates within isoprenoid biosynthesis; isopentenyl diphosphate biosynthesis via DXP pathway; isopentenyl diphosphate from 1-deoxy-D-xylulose 5-phosphate: step 3/6. In terms of biological role, catalyzes the phosphorylation of the position 2 hydroxy group of 4-diphosphocytidyl-2C-methyl-D-erythritol. This is 4-diphosphocytidyl-2-C-methyl-D-erythritol kinase from Acinetobacter baumannii (strain AB307-0294).